The following is a 99-amino-acid chain: Small ribosomal subunit protein bS6 (99 aa).

Belongs to the bacterial ribosomal protein bS6 family.

Binds together with bS18 to 16S ribosomal RNA. The polypeptide is Small ribosomal subunit protein bS6 (Lactiplantibacillus plantarum (strain ATCC BAA-793 / NCIMB 8826 / WCFS1) (Lactobacillus plantarum)).